A 260-amino-acid chain; its full sequence is Beta-lactamase SHV-6 (260 aa).

Positions 1-11 (LLATLPLAVHA) are cleaved as a signal peptide. S56 functions as the Acyl-ester intermediate in the catalytic mechanism. An intrachain disulfide couples C63 to C109. E154 (proton acceptor) is an active-site residue. 220-222 (KTG) is a substrate binding site.

It belongs to the class-A beta-lactamase family.

The catalysed reaction is a beta-lactam + H2O = a substituted beta-amino acid. SHV enzymes hydrolyze broad spectrum cephalosporins notably cefotaxime and ceftazidime. The sequence is that of Beta-lactamase SHV-6 (bla) from Klebsiella pneumoniae.